The chain runs to 246 residues: UDP-N-acetyl-D-mannosaminuronic acid transferase (246 aa).

Belongs to the glycosyltransferase 26 family.

It catalyses the reaction UDP-N-acetyl-alpha-D-mannosaminouronate + N-acetyl-alpha-D-glucosaminyl-di-trans,octa-cis-undecaprenyl diphosphate = beta-D-ManNAcA-(1-&gt;4)-alpha-D-GlcNAc-di-trans,octa-cis-undecaprenyl diphosphate + UDP + H(+). It participates in bacterial outer membrane biogenesis; enterobacterial common antigen biosynthesis. Functionally, catalyzes the synthesis of Und-PP-GlcNAc-ManNAcA (Lipid II), the second lipid-linked intermediate involved in enterobacterial common antigen (ECA) synthesis. The sequence is that of UDP-N-acetyl-D-mannosaminuronic acid transferase from Escherichia coli (strain 55989 / EAEC).